We begin with the raw amino-acid sequence, 552 residues long: Probable beta-glucosidase btgE (552 aa).

A signal peptide spans 1–18 (MRGAILATAAALAGTAMA). The segment at 250 to 291 (EPTSAPAAPSTTAVPATTTAAVPSTSSAAPSSSSTAPASTGA) is disordered. Over residues 251–289 (PTSAPAAPSTTAVPATTTAAVPSTSSAAPSSSSTAPAST) the composition is skewed to low complexity. The Proton donor role is filled by Glu392. The active-site Nucleophile is Glu488.

Belongs to the glycosyl hydrolase 17 family.

The protein localises to the secreted. It is found in the cell wall. It carries out the reaction Hydrolysis of terminal, non-reducing beta-D-glucosyl residues with release of beta-D-glucose.. The protein operates within glycan metabolism; cellulose degradation. In terms of biological role, beta-glucosidases are one of a number of cellulolytic enzymes involved in the degradation of cellulosic biomass. Catalyzes the last step releasing glucose from the inhibitory cellobiose. This chain is Probable beta-glucosidase btgE (btgE), found in Neosartorya fischeri (strain ATCC 1020 / DSM 3700 / CBS 544.65 / FGSC A1164 / JCM 1740 / NRRL 181 / WB 181) (Aspergillus fischerianus).